The chain runs to 193 residues: Major intrinsically disordered NOTCH2-binding receptor 1-like homolog (193 aa).

Residue S82 is modified to Phosphoserine. A glycan (N-linked (GlcNAc...) asparagine) is linked at N128. Residues 172 to 192 (GLILLLVASILVTIVTLSTIF) traverse the membrane as a helical segment.

Belongs to the MINAR family. Interacts with NOTCH2. In terms of tissue distribution, widely expressed in the cortex and Purkinje cells of cerebellum. Expressed in the inner ear, mainly in the hair cells, spiral ganglia, the spiral limbus, and the stria vascularis.

It is found in the lysosome membrane. The protein localises to the endoplasmic reticulum membrane. Functionally, binds cholesterol and may regulate the distribution and homeostasis of cholesterol in hair cells. May play a role in angiogenesis. The polypeptide is Major intrinsically disordered NOTCH2-binding receptor 1-like homolog (Mus musculus (Mouse)).